The following is a 599-amino-acid chain: Aspartate--tRNA(Asp/Asn) ligase (599 aa).

Residue E174 participates in L-aspartate binding. Residues 198-201 are aspartate; the sequence is QLFK. R220 contributes to the L-aspartate binding site. ATP is bound by residues 220–222 and Q229; that span reads RDE. Residue H457 coordinates L-aspartate. ATP is bound at residue E491. R498 lines the L-aspartate pocket. 543–546 contacts ATP; sequence GLDR.

It belongs to the class-II aminoacyl-tRNA synthetase family. Type 1 subfamily. Homodimer.

It is found in the cytoplasm. The enzyme catalyses tRNA(Asx) + L-aspartate + ATP = L-aspartyl-tRNA(Asx) + AMP + diphosphate. Its function is as follows. Aspartyl-tRNA synthetase with relaxed tRNA specificity since it is able to aspartylate not only its cognate tRNA(Asp) but also tRNA(Asn). Reaction proceeds in two steps: L-aspartate is first activated by ATP to form Asp-AMP and then transferred to the acceptor end of tRNA(Asp/Asn). The protein is Aspartate--tRNA(Asp/Asn) ligase of Paraburkholderia xenovorans (strain LB400).